The following is a 701-amino-acid chain: Polyribonucleotide nucleotidyltransferase (701 aa).

Mg(2+) is bound by residues Asp-489 and Asp-495. One can recognise a KH domain in the interval 556 to 615 (PRIHTMKIHPDKIREVIGSGGKVIRSITEETGCAIDIEDDGTIRIASSDQASAEQAVKII). The region spanning 625-693 (GQVYEGKVVR…RQGRVKLTMK (69 aa)) is the S1 motif domain.

It belongs to the polyribonucleotide nucleotidyltransferase family. Requires Mg(2+) as cofactor.

The protein localises to the cytoplasm. It catalyses the reaction RNA(n+1) + phosphate = RNA(n) + a ribonucleoside 5'-diphosphate. Involved in mRNA degradation. Catalyzes the phosphorolysis of single-stranded polyribonucleotides processively in the 3'- to 5'-direction. This chain is Polyribonucleotide nucleotidyltransferase, found in Magnetococcus marinus (strain ATCC BAA-1437 / JCM 17883 / MC-1).